The chain runs to 247 residues: Aspartate/glutamate leucyltransferase (247 aa).

This sequence belongs to the R-transferase family. Bpt subfamily.

The protein resides in the cytoplasm. The enzyme catalyses N-terminal L-glutamyl-[protein] + L-leucyl-tRNA(Leu) = N-terminal L-leucyl-L-glutamyl-[protein] + tRNA(Leu) + H(+). It carries out the reaction N-terminal L-aspartyl-[protein] + L-leucyl-tRNA(Leu) = N-terminal L-leucyl-L-aspartyl-[protein] + tRNA(Leu) + H(+). In terms of biological role, functions in the N-end rule pathway of protein degradation where it conjugates Leu from its aminoacyl-tRNA to the N-termini of proteins containing an N-terminal aspartate or glutamate. In Dechloromonas aromatica (strain RCB), this protein is Aspartate/glutamate leucyltransferase.